The primary structure comprises 284 residues: Bifunctional protein FolD (284 aa).

NADP(+)-binding positions include 165–167 and S190; that span reads GRS.

This sequence belongs to the tetrahydrofolate dehydrogenase/cyclohydrolase family. Homodimer.

It carries out the reaction (6R)-5,10-methylene-5,6,7,8-tetrahydrofolate + NADP(+) = (6R)-5,10-methenyltetrahydrofolate + NADPH. The enzyme catalyses (6R)-5,10-methenyltetrahydrofolate + H2O = (6R)-10-formyltetrahydrofolate + H(+). The protein operates within one-carbon metabolism; tetrahydrofolate interconversion. Its function is as follows. Catalyzes the oxidation of 5,10-methylenetetrahydrofolate to 5,10-methenyltetrahydrofolate and then the hydrolysis of 5,10-methenyltetrahydrofolate to 10-formyltetrahydrofolate. This chain is Bifunctional protein FolD, found in Streptococcus equi subsp. zooepidemicus (strain MGCS10565).